A 60-amino-acid polypeptide reads, in one-letter code: MAVQQNKKSPSKRGMHRSHDALTNPPLAIEPTTGETHLRHHISPNGFYRGKKVIKTKNDD.

The disordered stretch occupies residues 1–60 (MAVQQNKKSPSKRGMHRSHDALTNPPLAIEPTTGETHLRHHISPNGFYRGKKVIKTKNDD). Basic residues predominate over residues 49-60 (RGKKVIKTKNDD).

Belongs to the bacterial ribosomal protein bL32 family.

This is Large ribosomal subunit protein bL32 from Nitrosomonas eutropha (strain DSM 101675 / C91 / Nm57).